Reading from the N-terminus, the 382-residue chain is Lipid-A-disaccharide synthase (382 aa).

It belongs to the LpxB family.

It catalyses the reaction 2-N,3-O-bis[(3R)-3-hydroxytetradecanoyl]-alpha-D-glucosaminyl 1-phosphate + UDP-2-N,3-O-bis[(3R)-3-hydroxytetradecanoyl]-alpha-D-glucosamine = lipid A disaccharide (E. coli) + UDP + H(+). It carries out the reaction a lipid X + a UDP-2-N,3-O-bis[(3R)-3-hydroxyacyl]-alpha-D-glucosamine = a lipid A disaccharide + UDP + H(+). Its pathway is glycolipid biosynthesis; lipid IV(A) biosynthesis; lipid IV(A) from (3R)-3-hydroxytetradecanoyl-[acyl-carrier-protein] and UDP-N-acetyl-alpha-D-glucosamine: step 5/6. Condensation of UDP-2,3-diacylglucosamine and 2,3-diacylglucosamine-1-phosphate to form lipid A disaccharide, a precursor of lipid A, a phosphorylated glycolipid that anchors the lipopolysaccharide to the outer membrane of the cell. This Enterobacter sp. (strain 638) protein is Lipid-A-disaccharide synthase.